The sequence spans 39 residues: MNYKAFTQIAIDLLSAKLCNCTQAIMTHIIASFLAFMFF.

Residues Leu-13–Ala-35 traverse the membrane as a helical segment.

It is found in the cell inner membrane. The polypeptide is Protein YkiC (Escherichia coli (strain K12)).